A 294-amino-acid chain; its full sequence is Pyridoxal 5'-phosphate synthase subunit PdxS (294 aa).

Residue Asp-24 coordinates D-ribose 5-phosphate. The active-site Schiff-base intermediate with D-ribose 5-phosphate is Lys-81. Gly-153 is a D-ribose 5-phosphate binding site. Arg-165 contributes to the D-glyceraldehyde 3-phosphate binding site. Residues Gly-214 and 235–236 (GS) contribute to the D-ribose 5-phosphate site.

It belongs to the PdxS/SNZ family. In the presence of PdxT, forms a dodecamer of heterodimers.

It carries out the reaction aldehydo-D-ribose 5-phosphate + D-glyceraldehyde 3-phosphate + L-glutamine = pyridoxal 5'-phosphate + L-glutamate + phosphate + 3 H2O + H(+). Its pathway is cofactor biosynthesis; pyridoxal 5'-phosphate biosynthesis. Functionally, catalyzes the formation of pyridoxal 5'-phosphate from ribose 5-phosphate (RBP), glyceraldehyde 3-phosphate (G3P) and ammonia. The ammonia is provided by the PdxT subunit. Can also use ribulose 5-phosphate and dihydroxyacetone phosphate as substrates, resulting from enzyme-catalyzed isomerization of RBP and G3P, respectively. The protein is Pyridoxal 5'-phosphate synthase subunit PdxS of Geobacillus thermodenitrificans (strain NG80-2).